Consider the following 379-residue polypeptide: Cytochrome b (379 aa).

Helical transmembrane passes span 33–53, 77–98, 113–133, and 178–198; these read FGSL…FLAM, WILR…YIHV, WNIG…GYVL, and FFAF…VHLL. Heme b contacts are provided by histidine 83 and histidine 97. The heme b site is built by histidine 182 and histidine 196. Histidine 201 is a binding site for a ubiquinone. Transmembrane regions (helical) follow at residues 226–246, 288–308, 320–340, and 347–367; these read IKDI…VLFS, LGGV…PVLH, LSQC…WIGG, and YVIX…XXXX.

It belongs to the cytochrome b family. The cytochrome bc1 complex contains 11 subunits: 3 respiratory subunits (MT-CYB, CYC1 and UQCRFS1), 2 core proteins (UQCRC1 and UQCRC2) and 6 low-molecular weight proteins (UQCRH/QCR6, UQCRB/QCR7, UQCRQ/QCR8, UQCR10/QCR9, UQCR11/QCR10 and a cleavage product of UQCRFS1). This cytochrome bc1 complex then forms a dimer. Heme b is required as a cofactor.

Its subcellular location is the mitochondrion inner membrane. In terms of biological role, component of the ubiquinol-cytochrome c reductase complex (complex III or cytochrome b-c1 complex) that is part of the mitochondrial respiratory chain. The b-c1 complex mediates electron transfer from ubiquinol to cytochrome c. Contributes to the generation of a proton gradient across the mitochondrial membrane that is then used for ATP synthesis. This chain is Cytochrome b (MT-CYB), found in Myotis goudotii (Malagasy mouse-eared bat).